The primary structure comprises 357 residues: mRNA endoribonuclease toxin LS (357 aa).

In terms of assembly, forms homodimer in solution. Forms a complex with cognate antitoxin RnlB and with enterobacteria phage T4 antitoxin Dmd.

It localises to the cytoplasm. In terms of biological role, toxic component of a type II toxin-antitoxin (TA) system. A stable (half-life 27.6 minutes) endoribonuclease that in the absence of cognate antitoxin RnlB causes generalized RNA degradation. Degrades late enterobacteria phage T4 mRNAs, protecting the host against T4 reproduction. Activity is inhibited by cognate antitoxin RnlB and by enterobacteria phage T4 protein Dmd. Targets cyaA mRNA. This chain is mRNA endoribonuclease toxin LS (rnlA), found in Escherichia coli (strain K12).